Reading from the N-terminus, the 152-residue chain is Large ribosomal subunit protein bL9 (152 aa).

Belongs to the bacterial ribosomal protein bL9 family.

In terms of biological role, binds to the 23S rRNA. This Coxiella burnetii (strain RSA 331 / Henzerling II) protein is Large ribosomal subunit protein bL9.